The following is a 248-amino-acid chain: mRNA-decapping protein OPG122 (248 aa).

The Nudix hydrolase domain occupies 45-227 (HKRVSVSAIL…IAKYALDTAK (183 aa)). Residues 126 to 147 (GIPKRGENVPECLSREIKEEVN) carry the Nudix box motif. E132 is a binding site for Mg(2+). The Nucleophile role is filled by E141. E145 is a binding site for Mn(2+). Residue D167 participates in Mg(2+) binding.

It belongs to the Nudix hydrolase family. Mg(2+) is required as a cofactor. It depends on Mn(2+) as a cofactor.

It localises to the host mitochondrion. Decapping enzyme that remove the protective 5'-cap from both host and viral mRNAs to commit transcripts for decay by the cellular exonuclease XRN1. Preferentially targets spliced mRNAs and since all viral genes are intronless, it preferentially targets host over viral transcripts. Acceleration of the turnover of cellular transcripts promotes the shutoff of host protein synthesis and therefore diminish the magnitude of antiviral response. This Vaccinia virus (strain Copenhagen) (VACV) protein is mRNA-decapping protein OPG122 (OPG122).